The chain runs to 289 residues: 3-methyl-2-oxobutanoate hydroxymethyltransferase (289 aa).

Residues Asp58 and Asp99 each contribute to the Mg(2+) site. Residues 58–59 (DS), Asp99, and Lys128 each bind 3-methyl-2-oxobutanoate. Mg(2+) is bound at residue Glu130. Residue Glu197 is the Proton acceptor of the active site.

This sequence belongs to the PanB family. As to quaternary structure, homodecamer; pentamer of dimers. It depends on Mg(2+) as a cofactor.

Its subcellular location is the cytoplasm. The enzyme catalyses 3-methyl-2-oxobutanoate + (6R)-5,10-methylene-5,6,7,8-tetrahydrofolate + H2O = 2-dehydropantoate + (6S)-5,6,7,8-tetrahydrofolate. It participates in cofactor biosynthesis; (R)-pantothenate biosynthesis; (R)-pantoate from 3-methyl-2-oxobutanoate: step 1/2. Its function is as follows. Catalyzes the reversible reaction in which hydroxymethyl group from 5,10-methylenetetrahydrofolate is transferred onto alpha-ketoisovalerate to form ketopantoate. The protein is 3-methyl-2-oxobutanoate hydroxymethyltransferase of Leptothrix cholodnii (strain ATCC 51168 / LMG 8142 / SP-6) (Leptothrix discophora (strain SP-6)).